The primary structure comprises 142 residues: MTTVVAQGTFDLLHPGHLHYLREAAGMGDQLHVILARRENVTHKDPPILPNEQRREMVAALDPVDEAIVGHDDDIFIPVERIDPDLLVLGYDQHHDRGDIADALAERGIDCVVRRASEYEPGYEGAVLSTGRIVERILETRD.

ATP is bound by residues 9–10 (TF), 14–17 (HPGH), Asp-92, and Tyr-119.

The protein belongs to the archaeal FAD synthase family. Homodimer. A divalent metal cation is required as a cofactor.

The catalysed reaction is FMN + ATP + H(+) = FAD + diphosphate. Its pathway is cofactor biosynthesis; FAD biosynthesis; FAD from FMN: step 1/1. In terms of biological role, catalyzes the transfer of the AMP portion of ATP to flavin mononucleotide (FMN) to produce flavin adenine dinucleotide (FAD) coenzyme. The chain is FAD synthase from Halorhabdus utahensis (strain DSM 12940 / JCM 11049 / AX-2).